The following is a 252-amino-acid chain: F-box/SPRY domain-containing protein 1 (252 aa).

The 48-residue stretch at 1-48 (MVDPLCNYNVLESIFSYLELNDLNRCSQVCKSWYHFLNDENSDVWRWH) folds into the F-box domain. Residues 58 to 250 (VKSDLLSSVT…VSMVYLGTPL (193 aa)) form the B30.2/SPRY domain.

Belongs to the FBXO45/Fsn family. As to quaternary structure, component of an E3 ubiquitin ligase complex composed of hiw and Fsn.

It localises to the synapse. It functions in the pathway protein modification; protein ubiquitination. In terms of biological role, required in the presynaptic motoneuron to down-regulate the levels of wnd and restrain synaptic terminal growth at the neuromuscular junction (NMJ). This chain is F-box/SPRY domain-containing protein 1, found in Drosophila grimshawi (Hawaiian fruit fly).